The following is a 203-amino-acid chain: SOSS complex subunit B1-A (203 aa).

Residues 22-92 (IVLETGRVTK…TLYTGRGGDL (71 aa)) constitute a DNA-binding region (OB). The interval 110-203 (EPNPEYIAQQ…GKESRRTGKR (94 aa)) is disordered. Residues 118 to 140 (QQSQSKQGQQESGTGTNNHNSSS) show a composition bias toward low complexity. A compositionally biased stretch (polar residues) spans 149–182 (ENGNGSNSSGPPAHQSTAPAHSASGRITRSQPNH).

The protein belongs to the SOSS-B family. SOSS-B1 subfamily. In terms of assembly, component of the SOSS complex, composed of soss-b (soss-b1/nabp2 or soss-b2/nabp1), soss-a/ints3 and soss-c/inip. SOSS complexes containing soss-b1/nabp2 are more abundant than complexes containing soss-b2/nabp1.

The protein resides in the nucleus. In terms of biological role, component of the SOSS complex, a multiprotein complex that functions downstream of the MRN complex to promote DNA repair and G2/M checkpoint. In the SOSS complex, acts as a sensor of single-stranded DNA that binds to single-stranded DNA. The SOSS complex associates with DNA lesions and influences diverse endpoints in the cellular DNA damage response including cell-cycle checkpoint activation, recombinational repair and maintenance of genomic stability. Required for efficient homologous recombination-dependent repair of double-strand breaks (DSBs). This chain is SOSS complex subunit B1-A (nabp2-a), found in Xenopus laevis (African clawed frog).